A 627-amino-acid chain; its full sequence is Glucokinase regulatory protein (627 aa).

2 SIS domains span residues 90 to 286 (VQEV…QGVV) and 320 to 499 (VGIS…LLGK). Residues 109–110 (TS), E153, and 179–181 (SVG) contribute to the beta-D-fructose 1-phosphate site. Residue 109–110 (TS) participates in beta-D-fructose 6-phosphate binding. 179–181 (SVG) is a beta-D-fructose 6-phosphate binding site. The interval 199–200 (AV) is important for interaction with GCK. E348 is a binding site for beta-D-fructose 1-phosphate. Positions 463–465 (LLF) are essential for interaction with GCK. Residue K514 participates in beta-D-fructose 1-phosphate binding. K514 is a binding site for beta-D-fructose 6-phosphate.

This sequence belongs to the GCKR family. As to quaternary structure, interacts (fructose 6-phosphate bound form) with GCK. As to expression, detected in liver (at protein level). Not detected in muscle, brain, heart, testis, intestine or spleen.

The protein resides in the cytoplasm. It localises to the nucleus. The protein localises to the mitochondrion. Functionally, regulates glucokinase (GCK) by forming an inactive complex with this enzyme. Acts by promoting GCK recruitment to the nucleus, possibly to provide a reserve of GCK that can be quickly released in the cytoplasm after a meal. The affinity of GCKR for GCK is modulated by fructose metabolites: GCKR with bound fructose 6-phosphate has increased affinity for GCK, while GCKR with bound fructose 1-phosphate has strongly decreased affinity for GCK and does not inhibit GCK activity. The chain is Glucokinase regulatory protein from Rattus norvegicus (Rat).